We begin with the raw amino-acid sequence, 120 residues long: NADH dehydrogenase [ubiquinone] 1 subunit C2 (120 aa).

The helical transmembrane segment at Gly57–Leu76 threads the bilayer.

This sequence belongs to the complex I NDUFC2 subunit family. As to quaternary structure, complex I is composed of 45 different subunits. Interacts with TMEM242.

Its subcellular location is the mitochondrion inner membrane. Its function is as follows. Accessory subunit of the mitochondrial membrane respiratory chain NADH dehydrogenase (Complex I), that is believed not to be involved in catalysis but required for the complex assembly. Complex I functions in the transfer of electrons from NADH to the respiratory chain. The immediate electron acceptor for the enzyme is believed to be ubiquinone. The chain is NADH dehydrogenase [ubiquinone] 1 subunit C2 from Mus musculus (Mouse).